Reading from the N-terminus, the 669-residue chain is Putative transcription factor SOX-14 (669 aa).

Residues 1–12 (MIAKPNQATTEP) are compositionally biased toward polar residues. Disordered stretches follow at residues 1 to 149 (MIAK…EMTL), 254 to 336 (YKYR…PKYE), and 419 to 439 (SSLT…MDNI). Residues 17–37 (RPGTVPTVPATTPARPATITI) show a composition bias toward low complexity. Residues 52 to 71 (TLPPFSPSPSPASSPSPAPA) are compositionally biased toward pro residues. The segment covering 75 to 84 (GAQKTQSQAA) has biased composition (polar residues). Residues 88–105 (PAAVASPSAPVAAAAPKT) are compositionally biased toward low complexity. The segment covering 130 to 145 (RESEMDGERSPSHSGH) has biased composition (basic and acidic residues). A DNA-binding region (HMG box) is located at residues 187-255 (IKRPMNAFMV…LHMIEYPNYK (69 aa)). Residues 284–294 (TTNNNNSLTTL) are compositionally biased toward low complexity. Residues 295–318 (AINGTTTAGRKSKRSTSTCQSGSA) are compositionally biased toward polar residues. Basic and acidic residues predominate over residues 322–336 (LRNDSGDTSSKPKYE). Residues 419-431 (SSLTQSQHNQSDP) are compositionally biased toward polar residues.

It localises to the nucleus. The chain is Putative transcription factor SOX-14 (Sox14) from Drosophila melanogaster (Fruit fly).